The primary structure comprises 290 residues: UPF0761 membrane protein Ent638_4092 (290 aa).

Transmembrane regions (helical) follow at residues 44 to 64, 104 to 124, 140 to 160, 183 to 203, 210 to 230, and 244 to 264; these read LLSL…FPMF, VGAC…DSAL, FAVY…SLAI, IFPL…VPTL, AIVG…GFAL, and VLAV…IVLL.

This sequence belongs to the UPF0761 family.

It is found in the cell inner membrane. This Enterobacter sp. (strain 638) protein is UPF0761 membrane protein Ent638_4092.